A 490-amino-acid polypeptide reads, in one-letter code: MNYQRLAQLQKLVPQMRQVKRIHFIGIGGVGMSGIAKILLHEGYQISGSDLVQNKVTKHLVALGVSIKFQHIPENVLDANVVVVSSAISIANPEIVAAKKLRIPIITRAEMLAELMRFRYGIAIAGTHGKTTTTAMLASIYLEAGLDPTIVNGGLIKSIGQYARLGYGSYLIAEADESDLSFLHLQPIVTIITNIEADHMENYQGDFNYLKNTFLKFIHKLPFYGKGIMCLDDPVIRDLLPHISRHIITYGFNSKANFRLTNYHQKEAHVSFQLYRQDKPTLRIELNSPGRHNALNAVAAIAVATEEGIADKNILQALFRFKGINRRFDKLGCFSLKKINGKNGVVMLVEDYGHHPTELQATIQSVRIGWPDKRLVMVFQPHRYTRTRDLYEYFVGVLSKVDVLLMLDIYPAGENPIAGIDSKSLCCTIRNTSKLDPIFIHELNKLPVMLAQLLQDNDLVLMQGAGSIGLIASQLAIGKLQTNIRHNPLI.

An ATP-binding site is contributed by 126–132 (GTHGKTT).

This sequence belongs to the MurCDEF family.

It is found in the cytoplasm. It carries out the reaction UDP-N-acetyl-alpha-D-muramate + L-alanine + ATP = UDP-N-acetyl-alpha-D-muramoyl-L-alanine + ADP + phosphate + H(+). It participates in cell wall biogenesis; peptidoglycan biosynthesis. Cell wall formation. The chain is UDP-N-acetylmuramate--L-alanine ligase from Baumannia cicadellinicola subsp. Homalodisca coagulata.